A 35-amino-acid chain; its full sequence is Kunitz-type proteinase inhibitor AEPI-III (35 aa).

A BPTI/Kunitz inhibitor domain is found at 4–35; it reads CNLPAVVGRCKGYFPRYFYNTEAGKCQRFIYG.

This sequence belongs to the venom Kunitz-type family. Sea anemone type 2 potassium channel toxin subfamily.

It localises to the secreted. The protein localises to the nematocyst. Dual-function toxin that inhibits both the serine protease trypsin and voltage-gated potassium channels (Kv). The protein is Kunitz-type proteinase inhibitor AEPI-III of Actinia equina (Beadlet anemone).